Reading from the N-terminus, the 776-residue chain is Heat shock protein 110 (776 aa).

The disordered stretch occupies residues 741–776 (ILNKKKPAAPAPPKKEEPQPAAGDQPQSQPGEMDVD).

It belongs to the heat shock protein 70 family.

This is Heat shock protein 110 from Caenorhabditis elegans.